Consider the following 463-residue polypeptide: Siroheme synthase (463 aa).

The precorrin-2 dehydrogenase /sirohydrochlorin ferrochelatase stretch occupies residues 1–203 (MDYLPLFHKL…GQGAEAERLL (203 aa)). NAD(+)-binding positions include 22–23 (EI) and 43–44 (PE). At Ser-128 the chain carries Phosphoserine. The segment at 216–463 (GEVYLVGAGP…LAWFEGAQNS (248 aa)) is uroporphyrinogen-III C-methyltransferase. Pro-225 serves as a coordination point for S-adenosyl-L-methionine. The active-site Proton acceptor is Asp-248. Residue Lys-270 is the Proton donor of the active site. S-adenosyl-L-methionine is bound by residues 301–303 (GGD), Ile-306, 331–332 (TA), Met-383, and Gly-412.

In the N-terminal section; belongs to the precorrin-2 dehydrogenase / sirohydrochlorin ferrochelatase family. This sequence in the C-terminal section; belongs to the precorrin methyltransferase family.

It catalyses the reaction uroporphyrinogen III + 2 S-adenosyl-L-methionine = precorrin-2 + 2 S-adenosyl-L-homocysteine + H(+). It carries out the reaction precorrin-2 + NAD(+) = sirohydrochlorin + NADH + 2 H(+). The catalysed reaction is siroheme + 2 H(+) = sirohydrochlorin + Fe(2+). It functions in the pathway cofactor biosynthesis; adenosylcobalamin biosynthesis; precorrin-2 from uroporphyrinogen III: step 1/1. The protein operates within cofactor biosynthesis; adenosylcobalamin biosynthesis; sirohydrochlorin from precorrin-2: step 1/1. It participates in porphyrin-containing compound metabolism; siroheme biosynthesis; precorrin-2 from uroporphyrinogen III: step 1/1. Its pathway is porphyrin-containing compound metabolism; siroheme biosynthesis; siroheme from sirohydrochlorin: step 1/1. It functions in the pathway porphyrin-containing compound metabolism; siroheme biosynthesis; sirohydrochlorin from precorrin-2: step 1/1. In terms of biological role, multifunctional enzyme that catalyzes the SAM-dependent methylations of uroporphyrinogen III at position C-2 and C-7 to form precorrin-2 via precorrin-1. Then it catalyzes the NAD-dependent ring dehydrogenation of precorrin-2 to yield sirohydrochlorin. Finally, it catalyzes the ferrochelation of sirohydrochlorin to yield siroheme. The polypeptide is Siroheme synthase (Pseudomonas entomophila (strain L48)).